Consider the following 421-residue polypeptide: Lipid II:glycine glycyltransferase (421 aa).

The protein belongs to the FemABX family. As to quaternary structure, monomer.

It localises to the cytoplasm. The catalysed reaction is beta-D-GlcNAc-(1-&gt;4)-Mur2Ac(oyl-L-Ala-D-isoglutaminyl-L-Lys-D-Ala-D-Ala)-di-trans,octa-cis-undecaprenyl diphosphate + glycyl-tRNA(Gly) = beta-D-GlcNAc-(1-&gt;4)-Mur2Ac(oyl-L-Ala-D-isoglutaminyl-L-Lys-(N(6)-Gly)-D-Ala-D-Ala)-di-trans,octa-cis-undecaprenyl diphosphate + tRNA(Gly) + H(+). Functionally, catalyzes the incorporation of the first glycine of the pentaglycine interpeptide bridge, which is characteristic of the S.aureus peptidoglycan. This glycine is added to the epsilon-amino group of the L-lysine of the membrane-bound lipid II intermediate (GlcNAc-(beta-1,4)-N-acetylmuramic acid(-L-Ala-D-iGln-L-Lys-D-Ala-D-Ala)-pyrophosphoryl-undecaprenol), using glycyl-tRNA(Gly) as donor, in a ribosome-independent mechanism. Involved in methicillin resistance. This chain is Lipid II:glycine glycyltransferase (femX), found in Staphylococcus aureus (strain USA300).